We begin with the raw amino-acid sequence, 209 residues long: UPF0174 protein jhp_1493 (209 aa).

The protein belongs to the UPF0174 family.

This Helicobacter pylori (strain J99 / ATCC 700824) (Campylobacter pylori J99) protein is UPF0174 protein jhp_1493.